We begin with the raw amino-acid sequence, 509 residues long: Putative ATP-dependent RNA helicase QP509L (509 aa).

Positions 110–262 (KKLLSPYGRF…KIILHHLGQP (153 aa)) constitute a Helicase ATP-binding domain. Position 123–130 (123–130 (LNTGLGKT)) interacts with ATP. Residues 215-218 (DEAH) carry the DEAH box motif.

Belongs to the DEAD box helicase family. DEAH subfamily.

It catalyses the reaction ATP + H2O = ADP + phosphate + H(+). The chain is Putative ATP-dependent RNA helicase QP509L from Ornithodoros (relapsing fever ticks).